The primary structure comprises 363 residues: tRNA/tmRNA (uracil-C(5))-methyltransferase (363 aa).

Positions 187, 215, 220, 236, and 296 each coordinate S-adenosyl-L-methionine. Cysteine 321 serves as the catalytic Nucleophile. Catalysis depends on glutamate 355, which acts as the Proton acceptor.

It belongs to the class I-like SAM-binding methyltransferase superfamily. RNA M5U methyltransferase family. TrmA subfamily.

The enzyme catalyses uridine(54) in tRNA + S-adenosyl-L-methionine = 5-methyluridine(54) in tRNA + S-adenosyl-L-homocysteine + H(+). It catalyses the reaction uridine(341) in tmRNA + S-adenosyl-L-methionine = 5-methyluridine(341) in tmRNA + S-adenosyl-L-homocysteine + H(+). Dual-specificity methyltransferase that catalyzes the formation of 5-methyluridine at position 54 (m5U54) in all tRNAs, and that of position 341 (m5U341) in tmRNA (transfer-mRNA). This is tRNA/tmRNA (uracil-C(5))-methyltransferase from Haemophilus influenzae (strain 86-028NP).